The following is a 151-amino-acid chain: Aspartate carbamoyltransferase regulatory chain (151 aa).

Positions 107, 112, 135, and 138 each coordinate Zn(2+).

It belongs to the PyrI family. Contains catalytic and regulatory chains. It depends on Zn(2+) as a cofactor.

Involved in allosteric regulation of aspartate carbamoyltransferase. The chain is Aspartate carbamoyltransferase regulatory chain from Psychromonas ingrahamii (strain DSM 17664 / CCUG 51855 / 37).